We begin with the raw amino-acid sequence, 159 residues long: Small ribosomal subunit protein uS7 (159 aa).

The protein belongs to the universal ribosomal protein uS7 family. In terms of assembly, part of the 30S ribosomal subunit. Contacts proteins S9 and S11.

One of the primary rRNA binding proteins, it binds directly to 16S rRNA where it nucleates assembly of the head domain of the 30S subunit. Is located at the subunit interface close to the decoding center, probably blocks exit of the E-site tRNA. This Wolbachia pipientis wMel protein is Small ribosomal subunit protein uS7.